The primary structure comprises 47 residues: Large ribosomal subunit protein bL34 (47 aa).

It belongs to the bacterial ribosomal protein bL34 family.

The sequence is that of Large ribosomal subunit protein bL34 (rpmH) from Mycobacterium leprae (strain TN).